Reading from the N-terminus, the 39-residue chain is Cytochrome b559 subunit beta (39 aa).

A helical transmembrane segment spans residues 14–30 (WLAIHGLAVPTVFFLGS). Residue histidine 18 coordinates heme.

This sequence belongs to the PsbE/PsbF family. As to quaternary structure, heterodimer of an alpha subunit and a beta subunit. PSII is composed of 1 copy each of membrane proteins PsbA, PsbB, PsbC, PsbD, PsbE, PsbF, PsbH, PsbI, PsbJ, PsbK, PsbL, PsbM, PsbT, PsbX, PsbY, PsbZ, Psb30/Ycf12, at least 3 peripheral proteins of the oxygen-evolving complex and a large number of cofactors. It forms dimeric complexes. Heme b serves as cofactor.

The protein resides in the plastid. The protein localises to the chloroplast thylakoid membrane. This b-type cytochrome is tightly associated with the reaction center of photosystem II (PSII). PSII is a light-driven water:plastoquinone oxidoreductase that uses light energy to abstract electrons from H(2)O, generating O(2) and a proton gradient subsequently used for ATP formation. It consists of a core antenna complex that captures photons, and an electron transfer chain that converts photonic excitation into a charge separation. This chain is Cytochrome b559 subunit beta, found in Staurastrum punctulatum (Green alga).